The following is a 292-amino-acid chain: Ferric aerobactin-binding protein VatD (292 aa).

Residues 1 to 12 (MLSAALAFNSYA) form the signal peptide. Residues 30–292 (KVVALDWVLT…HITGRLTQPQ (263 aa)) enclose the Fe/B12 periplasmic-binding domain. Residues Trp61, Arg77, Tyr118, Arg185, Trp213, Phe215, Trp269, and Phe271 each coordinate desferrioxamine B.

It belongs to the bacterial solute-binding protein 8 family. In terms of assembly, the complex is composed of two ATP-binding proteins (VatC), two transmembrane proteins (VatB) and a solute-binding protein (VatD).

Its subcellular location is the periplasm. Functionally, part of the ABC transporter complex VatCDB involved in the import of iron(3+)-complexed aerobactin, a citrate-hydroxamate siderophore produced by other bacteria. Binds the iron(3+)-aerobactin complex and transfers it to the membrane-bound permease. Functions in the import of iron(3+)-complexed vulnibactin, a catecholate siderophore synthesized by V.vulnificus, in the absence of FatB. The polypeptide is Ferric aerobactin-binding protein VatD (Vibrio vulnificus).